Reading from the N-terminus, the 935-residue chain is Coiled-coil domain-containing protein 66 (935 aa).

Positions 76-96 are enriched in polar residues; sequence LDTSQAKPENSRLTFSPSTDK. The interval 76–103 is disordered; that stretch reads LDTSQAKPENSRLTFSPSTDKQYSEKDS. The residue at position 114 (Thr-114) is a Phosphothreonine. Ser-366 carries the post-translational modification Phosphoserine. Residues 462-555 are a coiled coil; the sequence is LEHQKAIMAQ…EQRIRELAQK (94 aa). 3 disordered regions span residues 470–491, 577–602, and 738–794; these read AQVEENRRKKRLEEEQRKKEEQ, TISSSHSDPEETADTSTASPKKDTGV, and ENLS…RTQQ. The span at 473-491 shows a compositional bias: basic and acidic residues; that stretch reads EENRRKKRLEEEQRKKEEQ. The mediates localization to cilia, centrosomes and spindle microtubules and the interaction with PCM1, CEP290, CEP104 and CSPP1 stretch occupies residues 567–935; the sequence is GAQVDYKAFT…NQEDNFSSSF (369 aa). Over residues 590-602 the composition is skewed to polar residues; sequence DTSTASPKKDTGV. Ser-595 carries the post-translational modification Phosphoserine. Positions 752 to 782 are enriched in basic and acidic residues; sequence SHRETESESRLHLIKKVEEPLKTPSVSKERF. Positions 783 to 794 are enriched in polar residues; that stretch reads QTSPAVKNRTQQ.

As to quaternary structure, homodimer; disulfide-linked. Interacts with CEP290. Interacts with PCM1. Interacts with ARMC9, TOGARAM1, CSPP1 and CEP104. Interacts with CDK5RAP2, CEP152, CEP192, TBG1 and PRC1. As to expression, widely expressed. Expressed in retina by rod photoreceptors but also detected in outer plexiform and ganglion cell layers (at protein level).

Its subcellular location is the cytoplasm. It localises to the cytoskeleton. The protein localises to the microtubule organizing center. It is found in the centrosome. The protein resides in the centriolar satellite. Its subcellular location is the cell projection. It localises to the cilium. The protein localises to the cilium basal body. It is found in the cilium axoneme. The protein resides in the photoreceptor inner segment. Its subcellular location is the photoreceptor outer segment. Microtubule-binding protein required for ciliogenesis. May function in ciliogenesis by mediating the transport of proteins like BBS4 to the cilium, but also through the organization of the centriolar satellites. Required for the assembly of signaling-competent cilia with proper structure and length. Mediates this function in part by regulating transition zone assembly and basal body recruitment of the IFT-B complex. Cooperates with the ciliopathy proteins CSPP1 and CEP104 during cilium length regulation. Plays two important roles during cell division. First, is required for mitotic progression via regulation of spindle assembly, organization and orientation, levels of spindle microtubules (MTs), kinetochore-fiber integrity, and chromosome alignment. Second, functions during cytokinesis in part by regulating assembly and organization of central spindle and midbody MTs. Plays a role in retina morphogenesis and/or homeostasis. The chain is Coiled-coil domain-containing protein 66 from Mus musculus (Mouse).